We begin with the raw amino-acid sequence, 60 residues long: Ferredoxin (60 aa).

4Fe-4S ferredoxin-type domains are found at residues 2–30 (VTID…EIQG) and 31–60 (DKVV…TVKE). 8 residues coordinate [4Fe-4S] cluster: cysteine 9, cysteine 14, cysteine 17, cysteine 21, cysteine 41, cysteine 44, cysteine 47, and cysteine 51.

Requires [4Fe-4S] cluster as cofactor.

Functionally, ferredoxins are iron-sulfur proteins that transfer electrons probably in the CO-dehydrogenase complex. The protein is Ferredoxin of Methanothermococcus thermolithotrophicus (Methanococcus thermolithotrophicus).